The following is a 61-amino-acid chain: UPF0434 protein Pmen_1615 (61 aa).

Belongs to the UPF0434 family.

This Ectopseudomonas mendocina (strain ymp) (Pseudomonas mendocina) protein is UPF0434 protein Pmen_1615.